The sequence spans 89 residues: MMNLSRAVVRSFATTAGRRSAAVPKDQIEKGYFEIRKVQEHFQKKDGKPVFLKGSVVDNVLYRVTVALALVGIGGMGKLFYELSVPKKE.

The N-terminal 31 residues, 1–31, are a transit peptide targeting the mitochondrion; that stretch reads MMNLSRAVVRSFATTAGRRSAAVPKDQIEKG. Topologically, residues 32-58 are mitochondrial matrix; the sequence is YFEIRKVQEHFQKKDGKPVFLKGSVVD. The chain crosses the membrane as a helical span at residues 59–81; the sequence is NVLYRVTVALALVGIGGMGKLFY. The Mitochondrial intermembrane portion of the chain corresponds to 82-89; it reads ELSVPKKE.

The protein belongs to the cytochrome c oxidase VIIa family. In terms of assembly, component of the cytochrome c oxidase (complex IV, CIV), a multisubunit enzyme composed of a catalytic core of 3 subunits and several supernumerary subunits. The complex exists as a monomer or a dimer and forms supercomplexes (SCs) in the inner mitochondrial membrane with ubiquinol-cytochrome c oxidoreductase (cytochrome b-c1 complex, complex III, CIII).

It is found in the mitochondrion inner membrane. It functions in the pathway energy metabolism; oxidative phosphorylation. In terms of biological role, component of the cytochrome c oxidase, the last enzyme in the mitochondrial electron transport chain which drives oxidative phosphorylation. The respiratory chain contains 3 multisubunit complexes succinate dehydrogenase (complex II, CII), ubiquinol-cytochrome c oxidoreductase (cytochrome b-c1 complex, complex III, CIII) and cytochrome c oxidase (complex IV, CIV), that cooperate to transfer electrons derived from NADH and succinate to molecular oxygen, creating an electrochemical gradient over the inner membrane that drives transmembrane transport and the ATP synthase. Cytochrome c oxidase is the component of the respiratory chain that catalyzes the reduction of oxygen to water. Electrons originating from reduced cytochrome c in the intermembrane space (IMS) are transferred via the dinuclear copper A center (CU(A)) of subunit 2 and heme A of subunit 1 to the active site in subunit 1, a binuclear center (BNC) formed by heme A3 and copper B (CU(B)). The BNC reduces molecular oxygen to 2 water molecules using 4 electrons from cytochrome c in the IMS and 4 protons from the mitochondrial matrix. The chain is Cytochrome c oxidase subunit 7A, mitochondrial from Drosophila melanogaster (Fruit fly).